We begin with the raw amino-acid sequence, 220 residues long: DNA replication complex GINS protein SLD5 (220 aa).

This sequence belongs to the GINS4/SLD5 family. Component of the GINS complex. Interacts with EOL1 in the nucleus.

It is found in the nucleus. In terms of biological role, the GINS complex plays an essential role in the initiation of DNA replication. Required during embryogenesis. This chain is DNA replication complex GINS protein SLD5, found in Arabidopsis thaliana (Mouse-ear cress).